A 324-amino-acid polypeptide reads, in one-letter code: Methenyltetrahydromethanopterin cyclohydrolase (324 aa).

Belongs to the MCH family.

It is found in the cytoplasm. The catalysed reaction is 5,10-methenyl-5,6,7,8-tetrahydromethanopterin + H2O = N(5)-formyl-5,6,7,8-tetrahydromethanopterin + H(+). It functions in the pathway one-carbon metabolism; formaldehyde degradation; formate from formaldehyde (H(4)MPT route): step 3/5. Catalyzes the hydrolysis of methenyl-H(4)MPT(+) to 5-formyl-H(4)MPT. The sequence is that of Methenyltetrahydromethanopterin cyclohydrolase from Methylobacterium sp. (strain 4-46).